Consider the following 281-residue polypeptide: Peptidyl-prolyl cis-trans isomerase CYP28, chloroplastic (281 aa).

Residues 1-24 constitute a chloroplast transit peptide; sequence MASSSILIPPILTRRNLLLSTTIA. The 203-residue stretch at 66–268 folds into the PPIase cyclophilin-type domain; sequence STTPCSDSTP…KTVFISGCGE (203 aa).

This sequence belongs to the cyclophilin-type PPIase family. Post-translationally, S-nytrosylated during the hypersensitive disease resistance response. In terms of tissue distribution, ubiquitous. Not detected in roots.

The protein resides in the plastid. Its subcellular location is the chloroplast. It carries out the reaction [protein]-peptidylproline (omega=180) = [protein]-peptidylproline (omega=0). PPIases accelerate the folding of proteins. It catalyzes the cis-trans isomerization of proline imidic peptide bonds in oligopeptides. This is Peptidyl-prolyl cis-trans isomerase CYP28, chloroplastic (CYP28) from Arabidopsis thaliana (Mouse-ear cress).